Consider the following 305-residue polypeptide: MQETLLSRAERSVPRLSAALNDYYQLTKPRIQVLLLITTAGAMWIAGKGHVEPLLLLVTLLGGTLAASSANAFNCLIDRDIDLLMERTRRRAIPAGRILPWQAALFATALGVASFAVLAAFANLFAALLAISGIGFYVVIYTLWLKRTTTQNIVIGGAAGAIPPLVGWAAVTGDLGWSAWVLFGIIFMWTPPHFWALAMMIREDYRKAGVPMLPVVAGDEATARQIFIYTLVLVPVTLVLYPLGTMGWIYLLAAGALGLWLIEGAFRLLKAPNDRKESRSLFKRSIFYLMLLFVAMGIDSIFLFA.

Helical transmembrane passes span 31-51 (IQVLLLITTAGAMWIAGKGHV), 53-73 (PLLLLVTLLGGTLAASSANAF), 98-118 (ILPWQAALFATALGVASFAVL), 124-144 (LFAALLAISGIGFYVVIYTLW), 153-173 (IVIGGAAGAIPPLVGWAAVTG), 181-201 (VLFGIIFMWTPPHFWALAMMI), 221-241 (ATARQIFIYTLVLVPVTLVLY), 242-262 (PLGTMGWIYLLAAGALGLWLI), and 285-305 (SIFYLMLLFVAMGIDSIFLFA).

Belongs to the UbiA prenyltransferase family. Protoheme IX farnesyltransferase subfamily.

The protein localises to the cell inner membrane. The enzyme catalyses heme b + (2E,6E)-farnesyl diphosphate + H2O = Fe(II)-heme o + diphosphate. It participates in porphyrin-containing compound metabolism; heme O biosynthesis; heme O from protoheme: step 1/1. Functionally, converts heme B (protoheme IX) to heme O by substitution of the vinyl group on carbon 2 of heme B porphyrin ring with a hydroxyethyl farnesyl side group. The protein is Protoheme IX farnesyltransferase of Gloeobacter violaceus (strain ATCC 29082 / PCC 7421).